The following is a 29-amino-acid chain: Galanin (29 aa).

Position 29 is an alanine amide (Ala29).

This sequence belongs to the galanin family.

The protein localises to the secreted. Its function is as follows. Contracts smooth muscle of the gastrointestinal and genitourinary tract, regulates growth hormone release, modulates insulin release, and may be involved in the control of adrenal secretion. The sequence is that of Galanin (gal) from Pelophylax ridibundus (Marsh frog).